The primary structure comprises 281 residues: uncharacterized protein (281 aa).

The segment at 1-30 (MVQIQFHQGEPLGHKKEKPPPVSPPSPPPI) is disordered. A compositionally biased stretch (pro residues) spans 20 to 30 (PPVSPPSPPPI). 7 consecutive transmembrane segments (helical) span residues 58-78 (TVVF…LIPW), 88-107 (TLPF…AYWL), 117-137 (MLVM…GLCF), 145-165 (AYVL…LMAW), 171-191 (LAIL…IAVQ), 196-216 (YQRI…IVLI), and 248-268 (VIMF…PNYA).

Belongs to the cytomegalovirus US12 family.

The protein resides in the host membrane. This is an uncharacterized protein from Homo sapiens (Human).